The following is a 434-amino-acid chain: Arrestin domain-containing protein 1 (434 aa).

The tract at residues 292–349 is disordered; that stretch reads SPCPGRESSPGTLSLVVPSAPPQEEAEAVASGPHFSDPVSLSTKSHSQQQPLSAPLGS. Polar residues predominate over residues 330–343; sequence VSLSTKSHSQQQPL. Short sequence motifs (PPxY motif) lie at residues 401–404 and 414–417; these read PPEY and PPSY.

Belongs to the arrestin family. Interacts (via PPxY motifs) with ITCH (via WW domains); the interaction is direct and participates in the recruitment of the ubiquitin-protein ligase ITCH to the NOTCH1 receptor. Interacts with ARRB1 and ARRB2; the interaction is direct. Interacts with TSG101; may recruit TSG101 to the plasma membrane. Interacts (via PPxY motifs) with WWP2 (via WW domains); ubiquitinates ARRDC1. Interacts with SLC11A2; controls the incorporation of SLC11A2 into extracellular vesicles through an ubiquitination-dependent mechanism. Interacts with WWP1 (via WW domains). Interacts with NEDD4 (via WW domains). Interacts with PDCD6IP. In terms of processing, ubiquitinated. Ubiquitination by WWP2; promotes localization to extracellular microvesicles. Ubiquitinated by WWP1.

It is found in the cell membrane. Functions as an adapter recruiting ubiquitin-protein ligases to their specific substrates. Through an ubiquitination-dependent mechanism plays for instance a role in the incorporation of SLC11A2 into extracellular vesicles. More generally, plays a role in the extracellular transport of proteins between cells through the release in the extracellular space of microvesicles. By participating to the ITCH-mediated ubiquitination and subsequent degradation of NOTCH1, negatively regulates the NOTCH signaling pathway. In Mus musculus (Mouse), this protein is Arrestin domain-containing protein 1.